The following is a 199-amino-acid chain: uncharacterized protein (199 aa).

The next 4 helical transmembrane spans lie at 40 to 60 (LLICVFKFCSLFMFSKFFCFL), 86 to 106 (VLTGASSSFTTTAVVAATFPF), 117 to 137 (TSWPLFIMLMSSSALPLLTSS), and 166 to 186 (FLLAMSMFVDFFSHPCFALIL).

It localises to the membrane. This is an uncharacterized protein from Saccharomyces cerevisiae (strain ATCC 204508 / S288c) (Baker's yeast).